The primary structure comprises 369 residues: 4-hydroxy-3-methylbut-2-en-1-yl diphosphate synthase (flavodoxin) (369 aa).

[4Fe-4S] cluster-binding residues include Cys270, Cys273, Cys305, and Glu312.

Belongs to the IspG family. The cofactor is [4Fe-4S] cluster.

It carries out the reaction (2E)-4-hydroxy-3-methylbut-2-enyl diphosphate + oxidized [flavodoxin] + H2O + 2 H(+) = 2-C-methyl-D-erythritol 2,4-cyclic diphosphate + reduced [flavodoxin]. It participates in isoprenoid biosynthesis; isopentenyl diphosphate biosynthesis via DXP pathway; isopentenyl diphosphate from 1-deoxy-D-xylulose 5-phosphate: step 5/6. In terms of biological role, converts 2C-methyl-D-erythritol 2,4-cyclodiphosphate (ME-2,4cPP) into 1-hydroxy-2-methyl-2-(E)-butenyl 4-diphosphate. The polypeptide is 4-hydroxy-3-methylbut-2-en-1-yl diphosphate synthase (flavodoxin) (Pseudomonas fluorescens (strain SBW25)).